Reading from the N-terminus, the 420-residue chain is rRNA methyltransferase 3, mitochondrial (420 aa).

The N-terminal 40 residues, M1 to V40, are a transit peptide targeting the mitochondrion. Residues E49–E88 are disordered. Over residues E69–A80 the composition is skewed to basic and acidic residues. S-adenosyl-L-methionine contacts are provided by G356, I380, and L389.

It belongs to the class IV-like SAM-binding methyltransferase superfamily. RNA methyltransferase TrmH family. As to expression, expressed at same level in normal liver and hepatocarcinoma.

It localises to the mitochondrion. It carries out the reaction guanosine(1370) in 16S rRNA + S-adenosyl-L-methionine = 2'-O-methylguanosine(1370) in 16S rRNA + S-adenosyl-L-homocysteine + H(+). In terms of biological role, S-adenosyl-L-methionine-dependent 2'-O-ribose methyltransferase that catalyzes the formation of 2'-O-methylguanosine at position 1370 (Gm1370) in the 16S mitochondrial large subunit ribosomal RNA (mtLSU rRNA), a conserved modification in the peptidyl transferase domain of the mtLSU rRNA. Also required for formation of 2'-O-methyluridine at position 1369 (Um1369) mediated by MRM2. This is rRNA methyltransferase 3, mitochondrial from Homo sapiens (Human).